A 318-amino-acid polypeptide reads, in one-letter code: Ethyl acetate hydrolase (318 aa).

Active-site residues include S165, D261, and H291.

This sequence belongs to the 'GDXG' lipolytic enzyme family. As to quaternary structure, monomer.

The protein localises to the cytoplasm. It carries out the reaction ethyl acetate + H2O = ethanol + acetate + H(+). Its activity is regulated as follows. Inhibited by the serine protease inhibitor phenylmethylsulfonyl fluoride, the histidine reagent diethylpyrocarbonate and two sulfhydryl reagents, mercuric chloride and naphthol AS-D chloroacetate. Not inhibited by EDTA. Functionally, esterase that catalyzes the hydrolysis of ethyl acetate. Can also use propyl acetate and the chromogenic substrates alpha-naphthyl acetate, alpha-naphthyl propionate, alpha-naphthyl caproate and 4-nitrophenyl acetate, with a preference for short-chain aliphatic esters. Highest activity is obtained in vitro with propyl acetate, followed by ethyl acetate. In vivo, could be involved in pyoverdine biosynthesis, but its specific role and its in vivo substrate have not been identified. This Pseudomonas putida (Arthrobacter siderocapsulatus) protein is Ethyl acetate hydrolase.